We begin with the raw amino-acid sequence, 328 residues long: Beta-ketoacyl-[acyl-carrier-protein] synthase III (328 aa).

Catalysis depends on residues cysteine 122 and histidine 255. An ACP-binding region spans residues 256–260 (QANVR). Residue asparagine 285 is part of the active site.

It belongs to the thiolase-like superfamily. FabH family. Homodimer.

The protein localises to the cytoplasm. The catalysed reaction is malonyl-[ACP] + acetyl-CoA + H(+) = 3-oxobutanoyl-[ACP] + CO2 + CoA. It participates in lipid metabolism; fatty acid biosynthesis. Its function is as follows. Catalyzes the condensation reaction of fatty acid synthesis by the addition to an acyl acceptor of two carbons from malonyl-ACP. Catalyzes the first condensation reaction which initiates fatty acid synthesis and may therefore play a role in governing the total rate of fatty acid production. Possesses both acetoacetyl-ACP synthase and acetyl transacylase activities. Its substrate specificity determines the biosynthesis of branched-chain and/or straight-chain of fatty acids. The sequence is that of Beta-ketoacyl-[acyl-carrier-protein] synthase III from Bordetella pertussis (strain Tohama I / ATCC BAA-589 / NCTC 13251).